The sequence spans 446 residues: Phosphoglucosamine mutase (446 aa).

S100 functions as the Phosphoserine intermediate in the catalytic mechanism. Mg(2+) contacts are provided by S100, D241, D243, and D245. S100 is modified (phosphoserine).

This sequence belongs to the phosphohexose mutase family. The cofactor is Mg(2+). Post-translationally, activated by phosphorylation.

The enzyme catalyses alpha-D-glucosamine 1-phosphate = D-glucosamine 6-phosphate. Its function is as follows. Catalyzes the conversion of glucosamine-6-phosphate to glucosamine-1-phosphate. The chain is Phosphoglucosamine mutase from Methylorubrum populi (strain ATCC BAA-705 / NCIMB 13946 / BJ001) (Methylobacterium populi).